A 1064-amino-acid polypeptide reads, in one-letter code: WD repeat-containing protein on Y chromosome (1064 aa).

8 WD repeats span residues 150–194 (EEVT…IRTA), 317–356 (RIPLGVSTFFVAESHNIVVTGGPDTFVRIWDVYIPTEPSA), 360–399 (GHNGGIVLVFVQPEENKVYSVDYQKIIKVWDLQEHTLLQT), 450–489 (THAAPVSVVLYNRLFRNIVTCGLDSYIIVWDPWTGRRKII), 502–541 (IIDIEITAACFDPLEQFLLTGARDGSLKIWNYNNAVVVRN), 589–629 (FHTD…RRYS), 742–781 (KTGDCVLTMCTDRKNRFLYTGTAFGYVKIWYIVNFCVPAS), and 825–864 (GHLKAINSIAFINLPKIVFTGSHDYSCRLWTQGGRYLGTL). The disordered stretch occupies residues 1022–1044 (SSLNIKQPTRRRSGKTHDPRNIR).

This chain is WD repeat-containing protein on Y chromosome, found in Drosophila ananassae (Fruit fly).